A 270-amino-acid polypeptide reads, in one-letter code: Acyl-[acyl-carrier-protein]--UDP-N-acetylglucosamine O-acyltransferase (270 aa).

Belongs to the transferase hexapeptide repeat family. LpxA subfamily. As to quaternary structure, homotrimer.

It localises to the cytoplasm. It carries out the reaction a (3R)-hydroxyacyl-[ACP] + UDP-N-acetyl-alpha-D-glucosamine = a UDP-3-O-[(3R)-3-hydroxyacyl]-N-acetyl-alpha-D-glucosamine + holo-[ACP]. Its pathway is glycolipid biosynthesis; lipid IV(A) biosynthesis; lipid IV(A) from (3R)-3-hydroxytetradecanoyl-[acyl-carrier-protein] and UDP-N-acetyl-alpha-D-glucosamine: step 1/6. In terms of biological role, involved in the biosynthesis of lipid A, a phosphorylated glycolipid that anchors the lipopolysaccharide to the outer membrane of the cell. The polypeptide is Acyl-[acyl-carrier-protein]--UDP-N-acetylglucosamine O-acyltransferase (Helicobacter acinonychis (strain Sheeba)).